Consider the following 106-residue polypeptide: ATP-dependent Clp protease adapter protein ClpS (106 aa).

The tract at residues 1–22 (MTDEPNQDDPQGPEVEAAKPSL) is disordered.

The protein belongs to the ClpS family. Binds to the N-terminal domain of the chaperone ClpA.

Its function is as follows. Involved in the modulation of the specificity of the ClpAP-mediated ATP-dependent protein degradation. The protein is ATP-dependent Clp protease adapter protein ClpS of Halorhodospira halophila (strain DSM 244 / SL1) (Ectothiorhodospira halophila (strain DSM 244 / SL1)).